A 457-amino-acid chain; its full sequence is Multidrug resistance protein MdtK (457 aa).

Helical transmembrane passes span 11-31 (LSAL…MGVV), 53-73 (IWLP…PVVA), 93-113 (FLAA…EYAI), 127-147 (AIGY…YQVL), 159-179 (PGMM…YIFI), 190-210 (GVGC…LMML), 249-269 (LLFE…LGVV), 276-296 (IALN…VATT), 313-333 (IAAH…AIFT), 357-377 (LMLL…GTGV), 387-407 (IFYI…YLLA), and 417-437 (GPAG…VMMV).

This sequence belongs to the multi antimicrobial extrusion (MATE) (TC 2.A.66.1) family. MdtK subfamily.

The protein resides in the cell inner membrane. Multidrug efflux pump that functions probably as a Na(+)/drug antiporter. The chain is Multidrug resistance protein MdtK from Pectobacterium atrosepticum (strain SCRI 1043 / ATCC BAA-672) (Erwinia carotovora subsp. atroseptica).